A 159-amino-acid chain; its full sequence is MTLEEVRGQDTVPESTARMQGAGKALHELLLSAHGQGCLTAGVYESAKVLNVDPDNVTFCVLAADEEDEGDIALQIHFTLIQAFCCENDIDIVRVGDVQRLAAIVGADEEGGAPGDLHCILISNPNEDTWKDPALEKLSLFCEESRSFNDWVPSITLPE.

The interval 43–86 is homodimerization; the sequence is VYESAKVLNVDPDNVTFCVLAADEEDEGDIALQIHFTLIQAFCC.

The protein belongs to the GADD45 family. In terms of assembly, undergoes concentration-dependent homodimerization, which is required for growth inhibititory activity and enhances interaction with PCNA. Interacts with GADD45GIP1. Interacts with PCNA.

Involved in the regulation of growth and apoptosis. Mediates activation of stress-responsive MTK1/MEKK4 MAPKKK. This is Growth arrest and DNA damage-inducible protein GADD45 gamma (Gadd45g) from Mus musculus (Mouse).